Consider the following 602-residue polypeptide: Protein DGS1, mitochondrial (602 aa).

A run of 2 helical transmembrane segments spans residues 300 to 320 (LYWV…IWLL) and 465 to 485 (INFA…MLTV).

In terms of assembly, component of a mitochondrial large protein complex that contains, at least, MIC60, DGS1, TOM40 (e.g. TOM40-1), TOM20 proteins (e.g. TOM20-2), and petC/RISP.

It localises to the mitochondrion outer membrane. Its function is as follows. Involved in galactoglycerolipid biosynthesis. Contributes to an intracellular signal that regulates an alternative DGD1-independent galactoglycerolipid biosynthesis pathway in chloroplasts. Being involved in mitochondrial lipid homeostasis, modulates mitochondrion biogenesis and physiology, as well as stress responses. This is Protein DGS1, mitochondrial from Arabidopsis thaliana (Mouse-ear cress).